The following is a 327-amino-acid chain: Phosphate acyltransferase (327 aa).

Belongs to the PlsX family. In terms of assembly, homodimer. Probably interacts with PlsY.

It is found in the cytoplasm. The catalysed reaction is a fatty acyl-[ACP] + phosphate = an acyl phosphate + holo-[ACP]. Its pathway is lipid metabolism; phospholipid metabolism. In terms of biological role, catalyzes the reversible formation of acyl-phosphate (acyl-PO(4)) from acyl-[acyl-carrier-protein] (acyl-ACP). This enzyme utilizes acyl-ACP as fatty acyl donor, but not acyl-CoA. The polypeptide is Phosphate acyltransferase (Mycoplasma mobile (strain ATCC 43663 / 163K / NCTC 11711) (Mesomycoplasma mobile)).